A 514-amino-acid polypeptide reads, in one-letter code: Type-2 serine--tRNA ligase (514 aa).

A313 serves as a coordination point for L-serine. C315 contributes to the Zn(2+) binding site. Residue R344 participates in L-serine binding. Residues 344-346 (RWE) and 355-356 (RV) contribute to the ATP site. An L-serine-binding site is contributed by 361–363 (RGE). Zn(2+) is bound by residues E363 and C470. R477 contacts ATP.

Belongs to the class-II aminoacyl-tRNA synthetase family. Type-2 seryl-tRNA synthetase subfamily. In terms of assembly, homodimer. It depends on Zn(2+) as a cofactor.

The protein localises to the cytoplasm. It carries out the reaction tRNA(Ser) + L-serine + ATP = L-seryl-tRNA(Ser) + AMP + diphosphate + H(+). The catalysed reaction is tRNA(Sec) + L-serine + ATP = L-seryl-tRNA(Sec) + AMP + diphosphate + H(+). It participates in aminoacyl-tRNA biosynthesis; selenocysteinyl-tRNA(Sec) biosynthesis; L-seryl-tRNA(Sec) from L-serine and tRNA(Sec): step 1/1. Its function is as follows. Catalyzes the attachment of serine to tRNA(Ser). Is also able to aminoacylate tRNA(Sec) with serine, to form the misacylated tRNA L-seryl-tRNA(Sec), which will be further converted into selenocysteinyl-tRNA(Sec). This chain is Type-2 serine--tRNA ligase, found in Methanococcus maripaludis (strain C6 / ATCC BAA-1332).